A 151-amino-acid polypeptide reads, in one-letter code: Allatostatin-A (151 aa).

The N-terminal stretch at Met-1–Ser-21 is a signal peptide. The propeptide occupies Ser-22–Asp-54. 3 positions are modified to leucine amide: Leu-64, Leu-88, and Leu-99. The propeptide occupies Ser-103–Asn-135. Positions Pro-131–Arg-151 are disordered. Residue Leu-148 is modified to Leucine amide.

The protein belongs to the allatostatin family.

Its subcellular location is the secreted. May act as a neurotransmitter or neuromodulator. This is Allatostatin-A (AstA) from Drosophila melanogaster (Fruit fly).